The following is a 209-amino-acid chain: ATP-dependent Clp protease proteolytic subunit (209 aa).

Residue S106 is the Nucleophile of the active site. H131 is a catalytic residue.

It belongs to the peptidase S14 family. As to quaternary structure, fourteen ClpP subunits assemble into 2 heptameric rings which stack back to back to give a disk-like structure with a central cavity, resembling the structure of eukaryotic proteasomes.

It is found in the cytoplasm. It carries out the reaction Hydrolysis of proteins to small peptides in the presence of ATP and magnesium. alpha-casein is the usual test substrate. In the absence of ATP, only oligopeptides shorter than five residues are hydrolyzed (such as succinyl-Leu-Tyr-|-NHMec, and Leu-Tyr-Leu-|-Tyr-Trp, in which cleavage of the -Tyr-|-Leu- and -Tyr-|-Trp bonds also occurs).. Its function is as follows. Cleaves peptides in various proteins in a process that requires ATP hydrolysis. Has a chymotrypsin-like activity. Plays a major role in the degradation of misfolded proteins. The chain is ATP-dependent Clp protease proteolytic subunit from Brucella canis (strain ATCC 23365 / NCTC 10854 / RM-666).